The sequence spans 401 residues: ATP-dependent RNA helicase eIF4A (401 aa).

The Q motif signature appears at Asp-28–Gln-56. The region spanning Ile-59–Ile-229 is the Helicase ATP-binding domain. Residue Ala-72–Thr-79 participates in ATP binding. A DEAD box motif is present at residues Asp-177–Asp-180. Residues Gly-240–Ile-401 form the Helicase C-terminal domain.

The protein belongs to the DEAD box helicase family. eIF4A subfamily. Component of the eIF4F complex, which composition varies with external and internal environmental conditions. It is composed of at least eIF4A, eIF4E and eIF4G.

Its subcellular location is the cytoplasm. It catalyses the reaction ATP + H2O = ADP + phosphate + H(+). Functionally, ATP-dependent RNA helicase which is a subunit of the eIF4F complex involved in cap recognition and is required for mRNA binding to ribosome. In the current model of translation initiation, eIF4A unwinds RNA secondary structures in the 5'-UTR of mRNAs which is necessary to allow efficient binding of the small ribosomal subunit, and subsequent scanning for the initiator codon. This chain is ATP-dependent RNA helicase eIF4A (TIF1), found in Cryptococcus neoformans var. neoformans serotype D (strain B-3501A) (Filobasidiella neoformans).